Here is a 117-residue protein sequence, read N- to C-terminus: Probable non-functional immunoglobulin kappa variable 1D-42 (117 aa).

An N-terminal signal peptide occupies residues 1–22; sequence MDMRVPAQLLGLLLLWLPGVRF. Residues 23–45 form a framework-1 region; sequence DIQMTQSPSFLSASVGDRVSIIC. One can recognise an Ig-like domain in the interval 23–117; the sequence is DIQMTQSPSF…YYCKQDFSYP (95 aa). Cys45 and Cys110 are disulfide-bonded. The segment at 46-56 is complementarity-determining-1; it reads WASEGISSNLA. The tract at residues 57–71 is framework-2; the sequence is WYLQKPGKSPKLFLY. The interval 72–78 is complementarity-determining-2; that stretch reads DAKDLHP. Residues 79–110 form a framework-3 region; that stretch reads GVSSRFSGRGSGTDFTLTIISLKPEDFAAYYC. Residues 111–117 are complementarity-determining-3; it reads KQDFSYP.

In terms of assembly, immunoglobulins are composed of two identical heavy chains and two identical light chains; disulfide-linked.

It localises to the secreted. The protein resides in the cell membrane. Probable non-functional open reading frame (ORF) of V region of the variable domain of immunoglobulin light chains. Non-functional ORF generally cannot participate in the synthesis of a productive immunoglobulin chain due to altered V-(D)-J or switch recombination and/or splicing site (at mRNA level) and/or conserved amino acid change (protein level). Immunoglobulins, also known as antibodies, are membrane-bound or secreted glycoproteins produced by B lymphocytes. In the recognition phase of humoral immunity, the membrane-bound immunoglobulins serve as receptors which, upon binding of a specific antigen, trigger the clonal expansion and differentiation of B lymphocytes into immunoglobulins-secreting plasma cells. Secreted immunoglobulins mediate the effector phase of humoral immunity, which results in the elimination of bound antigens. The antigen binding site is formed by the variable domain of one heavy chain, together with that of its associated light chain. Thus, each immunoglobulin has two antigen binding sites with remarkable affinity for a particular antigen. The variable domains are assembled by a process called V-(D)-J rearrangement and can then be subjected to somatic hypermutations which, after exposure to antigen and selection, allow affinity maturation for a particular antigen. In Homo sapiens (Human), this protein is Probable non-functional immunoglobulin kappa variable 1D-42.